The primary structure comprises 279 residues: Release factor glutamine methyltransferase (279 aa).

S-adenosyl-L-methionine is bound by residues D139 and N182. Residue N182 to Y185 participates in substrate binding.

The protein belongs to the protein N5-glutamine methyltransferase family. PrmC subfamily.

It carries out the reaction L-glutaminyl-[peptide chain release factor] + S-adenosyl-L-methionine = N(5)-methyl-L-glutaminyl-[peptide chain release factor] + S-adenosyl-L-homocysteine + H(+). In terms of biological role, methylates the class 1 translation termination release factors RF1/PrfA and RF2/PrfB on the glutamine residue of the universally conserved GGQ motif. The protein is Release factor glutamine methyltransferase of Thermodesulfovibrio yellowstonii (strain ATCC 51303 / DSM 11347 / YP87).